The following is a 296-amino-acid chain: Ribonuclease HIII (296 aa).

The RNase H type-2 domain maps to 80–296 (LALIGSDEVG…NTKKAYQRLK (217 aa)). A divalent metal cation is bound by residues Asp-86, Glu-87, and Asp-191.

This sequence belongs to the RNase HII family. RnhC subfamily. Mn(2+) is required as a cofactor. Mg(2+) serves as cofactor.

It localises to the cytoplasm. The enzyme catalyses Endonucleolytic cleavage to 5'-phosphomonoester.. Its function is as follows. Endonuclease that specifically degrades the RNA of RNA-DNA hybrids. The polypeptide is Ribonuclease HIII (Streptococcus thermophilus (strain ATCC BAA-250 / LMG 18311)).